The sequence spans 127 residues: MTNIGKCMQGYLDEQFMELEELQDDANPNFVEEVSALYFKDSARLINNIDQALERGSFDFNRLDSYMHQFKGSSTSIGASKVKAECTTFREYCRAGNAEGCLRTFQQLKKEHSTLRKKLEHYFQASQ.

Residues 27-122 enclose the HPt domain; that stretch reads NPNFVEEVSA…STLRKKLEHY (96 aa). His-68 is subject to Phosphohistidine.

Interacts with the B-type response regulators ARR1 and ARR2. Two-component system major event consists of a His-to-Asp phosphorelay between a sensor histidine kinase (HK) and a response regulator (RR). In plants, the His-to-Asp phosphorelay involves an additional intermediate named Histidine-containing phosphotransfer protein (HPt). This multistep phosphorelay consists of a His-Asp-His-Asp sequential transfer of a phosphate group between first a His and an Asp of the HK protein, followed by the transfer to a conserved His of the HPt protein and finally the transfer to an Asp in the receiver domain of the RR protein. As to expression, predominantly expressed in aerial parts of the plant.

The protein localises to the cytoplasm. It is found in the cytosol. It localises to the nucleus. Functionally, functions as a two-component phosphorelay mediator between cytokinin sensor histidine kinases and response regulators (B-type ARRs). Plays an important role in propagating cytokinin signal transduction through the multistep His-to-Asp phosphorelay. The protein is Histidine-containing phosphotransfer protein 4 (AHP4) of Arabidopsis thaliana (Mouse-ear cress).